A 288-amino-acid polypeptide reads, in one-letter code: Urease accessory protein UreD 1 (288 aa).

Over residues M1 to S10 the composition is skewed to pro residues. Residues M1–R35 form a disordered region.

This sequence belongs to the UreD family. In terms of assembly, ureD, UreF and UreG form a complex that acts as a GTP-hydrolysis-dependent molecular chaperone, activating the urease apoprotein by helping to assemble the nickel containing metallocenter of UreC. The UreE protein probably delivers the nickel.

The protein resides in the cytoplasm. Its function is as follows. Required for maturation of urease via the functional incorporation of the urease nickel metallocenter. This chain is Urease accessory protein UreD 1, found in Methylobacterium radiotolerans (strain ATCC 27329 / DSM 1819 / JCM 2831 / NBRC 15690 / NCIMB 10815 / 0-1).